A 308-amino-acid polypeptide reads, in one-letter code: Follistatin-related protein 1 (308 aa).

A signal peptide spans 1–20; that stretch reads MWKRWLALALALVAVAWVRA. In terms of domain architecture, Follistatin-like spans 30-53; sequence ICANVFCGAGRECAVTEKGEPTCL. 5 cysteine pairs are disulfide-bonded: Cys31/Cys42, Cys36/Cys52, Cys54/Cys84, Cys58/Cys77, and Cys66/Cys98. Residues 48–100 form the Kazal-like domain; sequence GEPTCLCIEQCKPHKRPVCGSNGKTYLNHCELHRDACLTGSKIQVDYDGHCKE. The N-linked (GlcNAc...) asparagine glycan is linked to Asn144. The region spanning 144–178 is the EF-hand 1 domain; it reads NYSEILDKYFKNFDNGDSRLDSSEFLKFVEQNETA. Ser165 carries the post-translational modification Phosphoserine. 2 N-linked (GlcNAc...) asparagine glycosylation sites follow: Asn175 and Asn180. The EF-hand 2 domain maps to 193-228; the sequence is LRGLCVDALIELSDENADWKLSFQEFLKCLNPSFNP. The VWFC domain maps to 233–287; the sequence is CALEDETYADGAETEVDCNRCVCACGNWVCTAMTCDGKNQKGAQTQTEEEMTRYV.

Homodimer. Interacts with SCN10A. Interacts with DIP2A; DIP2A may act as a cell surface receptor for FSTL1. Interacts with BMP4. Interacts with CD14; this interaction promotes TL4-mediated signaling cascade.

The protein localises to the secreted. Secreted glycoprotein that is involved in various physiological processes, such as angiogenesis, regulation of the immune response, cell proliferation and differentiation. Plays a role in the development of the central nervous system, skeletal system, lungs, and ureter. Promotes endothelial cell survival, migration and differentiation into network structures in an AKT-dependent manner. Also promotes survival of cardiac myocytes. Initiates various signaling cascades by activating different receptors on the cell surface such as DIP2A, TLR4 or BMP receptors. In Macaca fascicularis (Crab-eating macaque), this protein is Follistatin-related protein 1 (FSTL1).